We begin with the raw amino-acid sequence, 193 residues long: dCTP deaminase (193 aa).

DCTP is bound by residues 110-115 (RSSLAR), Asp-128, 136-138 (VLE), Tyr-171, Lys-178, and Gln-182. The Proton donor/acceptor role is filled by Glu-138. The segment at 168–193 (DRPYNRRQDAKYKNQQGAVSSRIDED) is disordered. Basic and acidic residues predominate over residues 170 to 179 (PYNRRQDAKY).

Belongs to the dCTP deaminase family. As to quaternary structure, homotrimer.

The catalysed reaction is dCTP + H2O + H(+) = dUTP + NH4(+). The protein operates within pyrimidine metabolism; dUMP biosynthesis; dUMP from dCTP (dUTP route): step 1/2. Catalyzes the deamination of dCTP to dUTP. The protein is dCTP deaminase of Photorhabdus laumondii subsp. laumondii (strain DSM 15139 / CIP 105565 / TT01) (Photorhabdus luminescens subsp. laumondii).